The sequence spans 585 residues: Arginine--tRNA ligase (585 aa).

Positions A131–H141 match the 'HIGH' region motif.

The protein belongs to the class-I aminoacyl-tRNA synthetase family. In terms of assembly, monomer.

Its subcellular location is the cytoplasm. The enzyme catalyses tRNA(Arg) + L-arginine + ATP = L-arginyl-tRNA(Arg) + AMP + diphosphate. In Brucella ovis (strain ATCC 25840 / 63/290 / NCTC 10512), this protein is Arginine--tRNA ligase.